The following is a 615-amino-acid chain: UvrABC system protein C (615 aa).

The region spanning 12-91 (EKPGVYIMKD…IKKYKPKYNV (80 aa)) is the GIY-YIG domain. The UVR domain maps to 203–238 (DWLIQKLKEDMKKAAEELRFEEAARIRDQIFAIERT).

This sequence belongs to the UvrC family. Interacts with UvrB in an incision complex.

The protein resides in the cytoplasm. In terms of biological role, the UvrABC repair system catalyzes the recognition and processing of DNA lesions. UvrC both incises the 5' and 3' sides of the lesion. The N-terminal half is responsible for the 3' incision and the C-terminal half is responsible for the 5' incision. This is UvrABC system protein C from Thermoanaerobacter sp. (strain X514).